We begin with the raw amino-acid sequence, 368 residues long: Probable dual-specificity RNA methyltransferase RlmN (368 aa).

The active-site Proton acceptor is the E100. Residues 106-344 (QYYGLSVCVT…CVVRQEHGTD (239 aa)) enclose the Radical SAM core domain. A disulfide bridge links C113 with C349. [4Fe-4S] cluster contacts are provided by C120, C124, and C127. S-adenosyl-L-methionine is bound by residues 172 to 173 (GE), S204, 227 to 229 (SLH), and N305. C349 (S-methylcysteine intermediate) is an active-site residue.

It belongs to the radical SAM superfamily. RlmN family. [4Fe-4S] cluster serves as cofactor.

The protein resides in the cytoplasm. The catalysed reaction is adenosine(2503) in 23S rRNA + 2 reduced [2Fe-2S]-[ferredoxin] + 2 S-adenosyl-L-methionine = 2-methyladenosine(2503) in 23S rRNA + 5'-deoxyadenosine + L-methionine + 2 oxidized [2Fe-2S]-[ferredoxin] + S-adenosyl-L-homocysteine. It catalyses the reaction adenosine(37) in tRNA + 2 reduced [2Fe-2S]-[ferredoxin] + 2 S-adenosyl-L-methionine = 2-methyladenosine(37) in tRNA + 5'-deoxyadenosine + L-methionine + 2 oxidized [2Fe-2S]-[ferredoxin] + S-adenosyl-L-homocysteine. Functionally, specifically methylates position 2 of adenine 2503 in 23S rRNA and position 2 of adenine 37 in tRNAs. This Streptococcus agalactiae serotype III (strain NEM316) protein is Probable dual-specificity RNA methyltransferase RlmN.